Here is a 164-residue protein sequence, read N- to C-terminus: Succinate dehydrogenase assembly factor 3, mitochondrial (164 aa).

Residues 1–51 constitute a mitochondrion transit peptide; sequence MRPTLLRLANASGPLPLSVSQASVQLIPPIPLYRRLLRAHRLLPVDMRYMG. A compositionally biased stretch (basic and acidic residues) spans 136–145; it reads KSPEQIEREA. The segment at 136 to 164 is disordered; it reads KSPEQIEREANSAGVSPVNPNDPTTAGNS. Residues 153 to 164 are compositionally biased toward polar residues; sequence VNPNDPTTAGNS.

This sequence belongs to the complex I LYR family. SDHAF3 subfamily. Interacts with the iron-sulfur protein subunit within the SDH catalytic dimer.

Its subcellular location is the mitochondrion matrix. Functionally, plays an essential role in the assembly of succinate dehydrogenase (SDH), an enzyme complex (also referred to as respiratory complex II) that is a component of both the tricarboxylic acid (TCA) cycle and the mitochondrial electron transport chain, and which couples the oxidation of succinate to fumarate with the reduction of ubiquinone (coenzyme Q) to ubiquinol. Promotes maturation of the iron-sulfur protein subunit of the SDH catalytic dimer, protecting it from the deleterious effects of oxidants. May act together with SDHAF1. The protein is Succinate dehydrogenase assembly factor 3, mitochondrial of Cryptococcus neoformans var. neoformans serotype D (strain B-3501A) (Filobasidiella neoformans).